A 278-amino-acid chain; its full sequence is MQFKSLLVSALAAASTALAQRSCGTPSPTEEQTEVAQRLQFNEENARVAGNATRLAPVTVNVYWHVIATSNSVSGGYLSQATLDKQLDVLNEAYAPHDIQFAQAGADWTINSNWASDRAELAMKRALRKGTYADLNVYFVPGTPYLGYAYFPTTVTTGSSAFYYDGVVILSDSVPGGSLSQYNLGHTATHEVGHWLGLYHTFEGYQCGGNGDYVSDTPFESEEAYGCEIGRDTCPSQAGDDPVTNYMDYSDDPCFTHFTTGQETRMHSYWTAYRASYQ.

Positions M1–A19 are cleaved as a signal peptide. N-linked (GlcNAc...) asparagine glycosylation is present at N51. H190 is a Zn(2+) binding site. E191 is a catalytic residue. H194 is a Zn(2+) binding site. The cysteines at positions 227 and 254 are disulfide-linked.

The protein belongs to the peptidase M43B family.

It localises to the secreted. Functionally, secreted metalloproteinase that allows assimilation of proteinaceous substrates. The sequence is that of Extracellular metalloprotease GLRG_06511 from Colletotrichum graminicola (strain M1.001 / M2 / FGSC 10212) (Maize anthracnose fungus).